The following is a 190-amino-acid chain: 3-isopropylmalate dehydratase small subunit (190 aa).

It belongs to the LeuD family. LeuD type 1 subfamily. As to quaternary structure, heterodimer of LeuC and LeuD.

The catalysed reaction is (2R,3S)-3-isopropylmalate = (2S)-2-isopropylmalate. The protein operates within amino-acid biosynthesis; L-leucine biosynthesis; L-leucine from 3-methyl-2-oxobutanoate: step 2/4. In terms of biological role, catalyzes the isomerization between 2-isopropylmalate and 3-isopropylmalate, via the formation of 2-isopropylmaleate. This Staphylococcus aureus (strain MRSA252) protein is 3-isopropylmalate dehydratase small subunit.